A 428-amino-acid polypeptide reads, in one-letter code: Probable RNase MJ4 (428 aa).

Zn(2+)-binding residues include His-57, His-59, Asp-61, His-62, His-143, Asp-165, and His-397.

Belongs to the metallo-beta-lactamase superfamily. RNA-metabolizing metallo-beta-lactamase-like family. The cofactor is Zn(2+).

In terms of biological role, probably an RNase. The polypeptide is Probable RNase MJ4 (Methanocaldococcus jannaschii (strain ATCC 43067 / DSM 2661 / JAL-1 / JCM 10045 / NBRC 100440) (Methanococcus jannaschii)).